A 334-amino-acid chain; its full sequence is ABC transporter L-arabinose-binding periplasmic protein (334 aa).

Residues 1–30 form the signal peptide; the sequence is MNRTIRRHTLRALLAALCIAPLGMQGAARA.

The protein belongs to the bacterial solute-binding protein 2 family. In terms of assembly, the complex is composed of two ATP-binding proteins (AraG), two transmembrane proteins (AraH) and a solute-binding protein (AraF).

The protein resides in the periplasm. In terms of biological role, part of the ABC transporter complex AraFGH involved in L-arabinose import. Binds with high affinity to L-arabinose. The chain is ABC transporter L-arabinose-binding periplasmic protein (araF) from Azospirillum brasilense.